Consider the following 232-residue polypeptide: Large ribosomal subunit protein uL1 (232 aa).

The protein belongs to the universal ribosomal protein uL1 family. Part of the 50S ribosomal subunit.

Its function is as follows. Binds directly to 23S rRNA. The L1 stalk is quite mobile in the ribosome, and is involved in E site tRNA release. Functionally, protein L1 is also a translational repressor protein, it controls the translation of the L11 operon by binding to its mRNA. This Parabacteroides distasonis (strain ATCC 8503 / DSM 20701 / CIP 104284 / JCM 5825 / NCTC 11152) protein is Large ribosomal subunit protein uL1.